The sequence spans 636 residues: Basic helix-loop-helix ARNT-like protein 2 (636 aa).

Residues 25–62 (VSSRVSPGTRPTAMGSFSSHMTEFPRKRKGSDSDPSQS) are disordered. The interaction with PER2 stretch occupies residues 46–258 (TEFPRKRKGS…SPREKLIDAK (213 aa)). Residues 49 to 54 (PRKRKG) carry the Nuclear localization signal motif. A bHLH domain is found at 107–160 (AFREAHSQTEKRRRDKMNNLIEELSAMIPQCNPMARKLDKLTVLRMAVQHLRSL). Residues 177 to 187 (LQDNELRHLIL) carry the Nuclear export signal 1 motif. Residues 178–250 (QDNELRHLIL…EQLSSFDISP (73 aa)) form the PAS 1 domain. Residue Lys287 forms a Glycyl lysine isopeptide (Lys-Gly) (interchain with G-Cter in SUMO2 and SUMO3) linkage. Residue Lys294 forms a Glycyl lysine isopeptide (Lys-Gly) (interchain with G-Cter in SUMO2) linkage. In terms of domain architecture, PAS 2 spans 357 to 427 (VPQNSGEINV…DKHKAVLQSK (71 aa)). The Nuclear export signal 2 signature appears at 392–400 (LGYLPQELL). One can recognise a PAC domain in the interval 432–475 (TDSYKFRAKDGSFVTLKSQWFSFTNPWTKELEYIVSVNTLVLGH).

As to quaternary structure, component of the circadian core oscillator, which includes the CRY proteins, CLOCK, or NPAS2, BMAL1 or BMAL2, CSNK1D and/or CSNK1E, TIMELESS and the PER proteins. Interacts directly with CLOCK to form the BMAL2-CLOCK transactivator. Can form heterodimers or homodimers which interact directly with CLOCK to form the transcription activator. Interacts with NPAS2 and HIF1A. Interacts with PER2. As to expression, expressed in fetal brain. Highly expressed in brain and placenta. Lower levels in heart, liver, thymus, kidney and lung. Located to endothelial cells and neuronal cells of the suprachiasmatic nucleus (SCN). Also detected in endothelial cells of the heart, lung and kidney. In the brain, specifically expressed in the thalamus, hippocampus and amygdala.

The protein resides in the nucleus. Functionally, transcriptional activator which forms a core component of the circadian clock. The circadian clock, an internal time-keeping system, regulates various physiological processes through the generation of approximately 24 hour circadian rhythms in gene expression, which are translated into rhythms in metabolism and behavior. It is derived from the Latin roots 'circa' (about) and 'diem' (day) and acts as an important regulator of a wide array of physiological functions including metabolism, sleep, body temperature, blood pressure, endocrine, immune, cardiovascular, and renal function. Consists of two major components: the central clock, residing in the suprachiasmatic nucleus (SCN) of the brain, and the peripheral clocks that are present in nearly every tissue and organ system. Both the central and peripheral clocks can be reset by environmental cues, also known as Zeitgebers (German for 'timegivers'). The predominant Zeitgeber for the central clock is light, which is sensed by retina and signals directly to the SCN. The central clock entrains the peripheral clocks through neuronal and hormonal signals, body temperature and feeding-related cues, aligning all clocks with the external light/dark cycle. Circadian rhythms allow an organism to achieve temporal homeostasis with its environment at the molecular level by regulating gene expression to create a peak of protein expression once every 24 hours to control when a particular physiological process is most active with respect to the solar day. Transcription and translation of core clock components (CLOCK, NPAS2, BMAL1, BMAL2, PER1, PER2, PER3, CRY1 and CRY2) plays a critical role in rhythm generation, whereas delays imposed by post-translational modifications (PTMs) are important for determining the period (tau) of the rhythms (tau refers to the period of a rhythm and is the length, in time, of one complete cycle). A diurnal rhythm is synchronized with the day/night cycle, while the ultradian and infradian rhythms have a period shorter and longer than 24 hours, respectively. Disruptions in the circadian rhythms contribute to the pathology of cardiovascular diseases, cancer, metabolic syndromes and aging. A transcription/translation feedback loop (TTFL) forms the core of the molecular circadian clock mechanism. Transcription factors, CLOCK or NPAS2 and BMAL1 or BMAL2, form the positive limb of the feedback loop, act in the form of a heterodimer and activate the transcription of core clock genes and clock-controlled genes (involved in key metabolic processes), harboring E-box elements (5'-CACGTG-3') within their promoters. The core clock genes: PER1/2/3 and CRY1/2 which are transcriptional repressors form the negative limb of the feedback loop and interact with the CLOCK|NPAS2-BMAL1|BMAL2 heterodimer inhibiting its activity and thereby negatively regulating their own expression. This heterodimer also activates nuclear receptors NR1D1/2 and RORA/B/G, which form a second feedback loop and which activate and repress BMAL1 transcription, respectively. The CLOCK-BMAL2 heterodimer activates the transcription of SERPINE1/PAI1 and BHLHE40/DEC1. The protein is Basic helix-loop-helix ARNT-like protein 2 of Homo sapiens (Human).